The chain runs to 211 residues: Cytidylate kinase (211 aa).

An ATP-binding site is contributed by 7-15 (GPAASGKGT).

It belongs to the cytidylate kinase family. Type 1 subfamily.

The protein resides in the cytoplasm. The enzyme catalyses CMP + ATP = CDP + ADP. It catalyses the reaction dCMP + ATP = dCDP + ADP. The sequence is that of Cytidylate kinase from Rhodopseudomonas palustris (strain BisA53).